A 436-amino-acid polypeptide reads, in one-letter code: Adenylosuccinate synthetase (436 aa).

Residues 22–28 (GDEGKGK) and 50–52 (GHE) contribute to the GTP site. The Proton acceptor role is filled by D23. Mg(2+)-binding residues include D23 and G50. Residues 23-26 (DEGK), 48-51 (NAGH), T141, R155, N231, T246, and R310 contribute to the IMP site. H51 (proton donor) is an active-site residue. 306–312 (VSTARVR) is a substrate binding site. Residues R312, 338–340 (KMD), and 424–426 (GVG) each bind GTP.

The protein belongs to the adenylosuccinate synthetase family. Homodimer. It depends on Mg(2+) as a cofactor.

Its subcellular location is the cytoplasm. It catalyses the reaction IMP + L-aspartate + GTP = N(6)-(1,2-dicarboxyethyl)-AMP + GDP + phosphate + 2 H(+). The protein operates within purine metabolism; AMP biosynthesis via de novo pathway; AMP from IMP: step 1/2. In terms of biological role, plays an important role in the salvage pathway for purine nucleotide biosynthesis. Catalyzes the first committed step in the biosynthesis of AMP from IMP. This Babesia bovis protein is Adenylosuccinate synthetase.